The chain runs to 288 residues: Homoserine kinase (288 aa).

78–88 (PLARGLGSSSS) serves as a coordination point for ATP.

The protein belongs to the GHMP kinase family. Homoserine kinase subfamily.

It localises to the cytoplasm. It carries out the reaction L-homoserine + ATP = O-phospho-L-homoserine + ADP + H(+). Its pathway is amino-acid biosynthesis; L-threonine biosynthesis; L-threonine from L-aspartate: step 4/5. Functionally, catalyzes the ATP-dependent phosphorylation of L-homoserine to L-homoserine phosphate. This Streptococcus mutans serotype c (strain ATCC 700610 / UA159) protein is Homoserine kinase.